A 475-amino-acid polypeptide reads, in one-letter code: UDP-glycosyltransferase 708A6 (475 aa).

Residues Ser286, 348-349 (WV), 366-374 (HCGWNSLTE), and 388-391 (FGDQ) contribute to the UDP-alpha-D-glucose site.

This sequence belongs to the UDP-glycosyltransferase family. As to expression, expressed in radicles, hypocotyls and juvenile leaves. Expressed at low levels in roots.

Its function is as follows. Bifunctional glycosyltransferase that can produce both C- and O-glycosidated flavonoids. Converts 2-hydroxynaringenin to isovitexin. Converts eriodictyol to orientin and isoorientin. Converts naringenin and eriodictyol to naringenin 7-O-glucoside and eriodictyol 7-O-glucoside, respectively. The chain is UDP-glycosyltransferase 708A6 from Zea mays (Maize).